We begin with the raw amino-acid sequence, 186 residues long: MELSAAAGRRRQAPWREFTGRHRTERSQERGSTPRKERSMGSRQPRKREREPRDCTPTCTNAASVSRSGARRAPGCAGRCITMKNCARAWRELSERACCFQAVPPSNMKQSWLIFLDTTLCSAWLLASSCPRLYAPLISFHCMCFNTVLLFPRLFGPTLSAKIQFNTDLSLRAIAWKCTKDTTTYC.

Positions 1 to 62 (MELSAAAGRR…RDCTPTCTNA (62 aa)) are disordered. Residues 18–40 (FTGRHRTERSQERGSTPRKERSM) are compositionally biased toward basic and acidic residues.

Functionally, may play a role in cAMP-mediated gene transcription. The sequence is that of Putative transcriptional regulator encoded by LINC00473 (LINC00473) from Homo sapiens (Human).